Here is a 326-residue protein sequence, read N- to C-terminus: Deoxyuridine 5'-triphosphate nucleotidohydrolase (326 aa).

Substrate-binding positions include 218–220 and 321–322; these read RSS and FG.

It belongs to the dUTPase family. Mg(2+) serves as cofactor.

It catalyses the reaction dUTP + H2O = dUMP + diphosphate + H(+). Functionally, involved in nucleotide metabolism: produces dUMP, the immediate precursor of thymidine nucleotides and decreases the intracellular concentration of dUTP to avoid uracil incorporation into viral DNA. In Equus caballus (Horse), this protein is Deoxyuridine 5'-triphosphate nucleotidohydrolase.